The primary structure comprises 250 residues: tRNA (guanine-N(1)-)-methyltransferase (250 aa).

S-adenosyl-L-methionine contacts are provided by residues Gly114 and 134–139 (IGDYVL).

It belongs to the RNA methyltransferase TrmD family. In terms of assembly, homodimer.

It localises to the cytoplasm. The catalysed reaction is guanosine(37) in tRNA + S-adenosyl-L-methionine = N(1)-methylguanosine(37) in tRNA + S-adenosyl-L-homocysteine + H(+). In terms of biological role, specifically methylates guanosine-37 in various tRNAs. The chain is tRNA (guanine-N(1)-)-methyltransferase from Moorella thermoacetica (strain ATCC 39073 / JCM 9320).